The sequence spans 680 residues: WD repeat-containing protein 48 homolog (680 aa).

WD repeat units follow at residues 26-65, 71-110, 113-152, 164-203, 206-245, 248-287, 290-329, and 350-389; these read QHRN…SEKY, HHND…CMST, THRD…ALTA, GSKD…RIMK, GHTE…CVQT, VHKE…NKTL, EEQA…RCTL, and KGGA…KKEQ. A disordered region spans residues 592–616; the sequence is ETTPSGGNANNSLQNSQSDANSEGS.

It belongs to the WD repeat WDR48 family. In terms of assembly, catalytic component of the Usp12-46 deubiquitylase complex consisting of Usp12-46, Wdr20 and Uaf1; regulatory subunit that, together wtih Wdr20, stabilizes Usp12-46. The Usp12-46 deubiquitylase complex associates with arr/arrow; the interaction leads to deubiquitination and stabilization of arr/arrow.

Functionally, regulatory component of the Usp12-46 deubiquitylase complex. activates deubiquitination by increasing the catalytic turnover without increasing the affinity of deubiquitinating enzymes for the substrate. The complex deubiquitylates the wg/wingless-signaling receptor arr/arrow, which stabilizes the receptor and increases its concentration at the cell surface; this enhances the sensitivity of cells to wg/wingless-signal stimulation. This increases the amplitude and spatial range of the signaling response to the wg/wingless morphogen gradient, facilitating the precise concentration-dependent regulation of its target genes. Together with Wdr20 and Usp12-46 required for wg/wingless-mediated signaling in the wing imaginal disc and for wg/wingless-dependent regulation of intestinal stem cell proliferation. The polypeptide is WD repeat-containing protein 48 homolog (Drosophila sechellia (Fruit fly)).